We begin with the raw amino-acid sequence, 127 residues long: Large ribosomal subunit protein bL12 (127 aa).

Belongs to the bacterial ribosomal protein bL12 family. In terms of assembly, homodimer. Part of the ribosomal stalk of the 50S ribosomal subunit. Forms a multimeric L10(L12)X complex, where L10 forms an elongated spine to which 2 to 4 L12 dimers bind in a sequential fashion. Binds GTP-bound translation factors.

Forms part of the ribosomal stalk which helps the ribosome interact with GTP-bound translation factors. Is thus essential for accurate translation. The sequence is that of Large ribosomal subunit protein bL12 from Carboxydothermus hydrogenoformans (strain ATCC BAA-161 / DSM 6008 / Z-2901).